Reading from the N-terminus, the 297-residue chain is Tumor necrosis factor receptor superfamily member 27 (297 aa).

The Extracellular segment spans residues 1 to 138; that stretch reads MDCQENEYRD…AHTVPPREAT (138 aa). 3 TNFR-Cys repeats span residues 2-41, 43-83, and 85-118; these read DCQE…DAHC, VCPP…NAIC, and DCLP…EVQC. Cystine bridges form between cysteine 3–cysteine 15, cysteine 18–cysteine 31, cysteine 21–cysteine 41, cysteine 44–cysteine 58, cysteine 61–cysteine 75, cysteine 64–cysteine 83, cysteine 86–cysteine 104, and cysteine 107–cysteine 118. 2 N-linked (GlcNAc...) asparagine glycosylation sites follow: asparagine 74 and asparagine 77. The helical; Signal-anchor for type III membrane protein transmembrane segment at 139 to 159 threads the bilayer; the sequence is LVALVGSLLVVFALAFLGLFF. Residues 160-297 lie on the Cytoplasmic side of the membrane; it reads LYCKQIFNRH…LYVPFEVPSL (138 aa).

As to quaternary structure, associates with TRAF1, TRAF3 and TRAF6.

It is found in the membrane. In terms of biological role, receptor for EDA isoform A2, but not for EDA isoform A1. Mediates the activation of the NF-kappa-B and JNK pathways. Activation seems to be mediated by binding to TRAF3 and TRAF6. This Mus musculus (Mouse) protein is Tumor necrosis factor receptor superfamily member 27 (Eda2r).